A 492-amino-acid chain; its full sequence is Anthranilate synthase component 1 (492 aa).

L-tryptophan-binding positions include Ser-48 and 273–275; that span reads PYM. Residue 308 to 309 coordinates chorismate; that stretch reads GT. Glu-335 is a binding site for Mg(2+). Chorismate is bound by residues Tyr-423, Arg-443, 457 to 459, and Gly-459; that span reads GGG. Glu-472 contributes to the Mg(2+) binding site.

The protein belongs to the anthranilate synthase component I family. As to quaternary structure, heterotetramer consisting of two non-identical subunits: a beta subunit (TrpG) and a large alpha subunit (TrpE). It depends on Mg(2+) as a cofactor.

The enzyme catalyses chorismate + L-glutamine = anthranilate + pyruvate + L-glutamate + H(+). It participates in amino-acid biosynthesis; L-tryptophan biosynthesis; L-tryptophan from chorismate: step 1/5. Feedback inhibited by tryptophan. Part of a heterotetrameric complex that catalyzes the two-step biosynthesis of anthranilate, an intermediate in the biosynthesis of L-tryptophan. In the first step, the glutamine-binding beta subunit (TrpG) of anthranilate synthase (AS) provides the glutamine amidotransferase activity which generates ammonia as a substrate that, along with chorismate, is used in the second step, catalyzed by the large alpha subunit of AS (TrpE) to produce anthranilate. In the absence of TrpG, TrpE can synthesize anthranilate directly from chorismate and high concentrations of ammonia. This is Anthranilate synthase component 1 from Pseudomonas aeruginosa (strain ATCC 15692 / DSM 22644 / CIP 104116 / JCM 14847 / LMG 12228 / 1C / PRS 101 / PAO1).